Consider the following 480-residue polypeptide: uncharacterized protein (480 aa).

A helical transmembrane segment spans residues 7 to 28 (HVISIFETFGAYFINIFYNFLY). 2 N-linked (GlcNAc...) asparagine; by host glycosylation sites follow: Asn-73 and Asn-195. Positions 195–235 (NRSLLYQIEELTSEKKSLLAELSTLRKKYEKRQSEYRRLVQ) form a coiled coil. A disordered region spans residues 297 to 332 (ELTSKSPSNYPVPQSRTIVSKPSDNYPVPQSRSSKI). Polar residues predominate over residues 301–329 (KSPSNYPVPQSRTIVSKPSDNYPVPQSRS). Asn-455 carries an N-linked (GlcNAc...) asparagine; by host glycan.

Belongs to the asfivirus B475L family.

Its subcellular location is the host membrane. This is an uncharacterized protein from African swine fever virus (isolate Pig/Kenya/KEN-50/1950) (ASFV).